The chain runs to 421 residues: Tyrosine--tRNA ligase (421 aa).

Tyr38 serves as a coordination point for L-tyrosine. Positions Pro43–His52 match the 'HIGH' region motif. Residues Tyr169 and Gln173 each coordinate L-tyrosine. The 'KMSKS' region signature appears at Lys231–Ser235. Lys234 contacts ATP. Residues Lys353–Ile419 form the S4 RNA-binding domain.

This sequence belongs to the class-I aminoacyl-tRNA synthetase family. TyrS type 1 subfamily. As to quaternary structure, homodimer.

It localises to the cytoplasm. It catalyses the reaction tRNA(Tyr) + L-tyrosine + ATP = L-tyrosyl-tRNA(Tyr) + AMP + diphosphate + H(+). Its function is as follows. Catalyzes the attachment of tyrosine to tRNA(Tyr) in a two-step reaction: tyrosine is first activated by ATP to form Tyr-AMP and then transferred to the acceptor end of tRNA(Tyr). In Lactobacillus delbrueckii subsp. bulgaricus (strain ATCC BAA-365 / Lb-18), this protein is Tyrosine--tRNA ligase.